The following is a 172-amino-acid chain: Co-chaperone protein HscB (172 aa).

Residues 2–74 (DYFTLFGLPI…LKRAEYMLSL (73 aa)) enclose the J domain.

The protein belongs to the HscB family. In terms of assembly, interacts with HscA and stimulates its ATPase activity. Interacts with IscU.

In terms of biological role, co-chaperone involved in the maturation of iron-sulfur cluster-containing proteins. Seems to help targeting proteins to be folded toward HscA. This is Co-chaperone protein HscB from Pectobacterium carotovorum subsp. carotovorum (strain PC1).